The following is a 489-amino-acid chain: GDP-fucose protein O-fucosyltransferase 4 (489 aa).

Residues methionine 1–glutamate 7 are Cytoplasmic-facing. The helical; Signal-anchor for type II membrane protein transmembrane segment at alanine 8–serine 24 threads the bilayer. At glycine 25–leucine 489 the chain is on the lumenal side. N-linked (GlcNAc...) asparagine glycosylation is present at asparagine 162. Cysteine 385 and cysteine 388 are joined by a disulfide.

It belongs to the glycosyltransferase 10 family. As to expression, widely expressed. Expressed at slightly higher level in heart, kidney and lung.

The protein resides in the endoplasmic reticulum membrane. It catalyses the reaction L-threonyl-[protein] + GDP-beta-L-fucose = 3-O-(alpha-L-fucosyl)-L-threonyl-[protein] + GDP + H(+). The catalysed reaction is L-seryl-[protein] + GDP-beta-L-fucose = 3-O-(alpha-L-fucosyl)-L-seryl-[protein] + GDP + H(+). It functions in the pathway protein modification; protein glycosylation. Its function is as follows. Protein O-fucosyltransferase that specifically catalyzes O-fucosylation of serine or threonine residues in EMI domains of target proteins, such as MMRN1, MMRN2 and EMID1. Attaches fucose through an O-glycosidic linkage. O-fucosylation of EMI domain-containing proteins may be required for facilitating protein folding and secretion. Also shows minor alpha-(1,3)-fucosyltransferase activity toward activity toward biantennary N-glycan acceptors. However, this was tested with a library of synthetic substrates and this activity is unsure in vivo. The polypeptide is GDP-fucose protein O-fucosyltransferase 4 (Fut11) (Mus musculus (Mouse)).